Consider the following 54-residue polypeptide: Large ribosomal subunit protein bL32 (54 aa).

The tract at residues 1–24 is disordered; that stretch reads MAVQKSKPTRSKRGMRRSHDSLKE. The segment covering 7–16 has biased composition (basic residues); the sequence is KPTRSKRGMR.

This sequence belongs to the bacterial ribosomal protein bL32 family.

In Buchnera aphidicola subsp. Schizaphis graminum (strain Sg), this protein is Large ribosomal subunit protein bL32.